Consider the following 224-residue polypeptide: Uridylate kinase (224 aa).

Residue 9–10 (GS) coordinates ATP. Residue G43 participates in UMP binding. Residues G44 and R48 each contribute to the ATP site. UMP contacts are provided by residues D65 and 113–119 (TEPAHST). Residues T139, Y145, and D148 each contribute to the ATP site.

Belongs to the UMP kinase family. Homohexamer.

The protein resides in the cytoplasm. It catalyses the reaction UMP + ATP = UDP + ADP. It functions in the pathway pyrimidine metabolism; CTP biosynthesis via de novo pathway; UDP from UMP (UMPK route): step 1/1. Its activity is regulated as follows. Inhibited by UTP. Functionally, catalyzes the reversible phosphorylation of UMP to UDP. The protein is Uridylate kinase of Methanothermobacter thermautotrophicus (strain ATCC 29096 / DSM 1053 / JCM 10044 / NBRC 100330 / Delta H) (Methanobacterium thermoautotrophicum).